The primary structure comprises 374 residues: S-adenosylmethionine:tRNA ribosyltransferase-isomerase (374 aa).

This sequence belongs to the QueA family. As to quaternary structure, monomer.

Its subcellular location is the cytoplasm. The catalysed reaction is 7-aminomethyl-7-carbaguanosine(34) in tRNA + S-adenosyl-L-methionine = epoxyqueuosine(34) in tRNA + adenine + L-methionine + 2 H(+). The protein operates within tRNA modification; tRNA-queuosine biosynthesis. Transfers and isomerizes the ribose moiety from AdoMet to the 7-aminomethyl group of 7-deazaguanine (preQ1-tRNA) to give epoxyqueuosine (oQ-tRNA). In Prochlorococcus marinus (strain MIT 9215), this protein is S-adenosylmethionine:tRNA ribosyltransferase-isomerase.